We begin with the raw amino-acid sequence, 254 residues long: Ribosomal RNA small subunit methyltransferase J (254 aa).

S-adenosyl-L-methionine is bound by residues 107 to 108, 123 to 124, and Asp-174; these read RD and ER.

It belongs to the methyltransferase superfamily. RsmJ family.

The protein localises to the cytoplasm. The enzyme catalyses guanosine(1516) in 16S rRNA + S-adenosyl-L-methionine = N(2)-methylguanosine(1516) in 16S rRNA + S-adenosyl-L-homocysteine + H(+). Its function is as follows. Specifically methylates the guanosine in position 1516 of 16S rRNA. This Coxiella burnetii (strain Dugway 5J108-111) protein is Ribosomal RNA small subunit methyltransferase J.